A 256-amino-acid chain; its full sequence is Thiazole synthase (256 aa).

The Schiff-base intermediate with DXP role is filled by K91. Residues G152, 179–180 (AG), and 201–202 (NT) each bind 1-deoxy-D-xylulose 5-phosphate.

The protein belongs to the ThiG family. As to quaternary structure, homotetramer. Forms heterodimers with either ThiH or ThiS.

The protein resides in the cytoplasm. It catalyses the reaction [ThiS sulfur-carrier protein]-C-terminal-Gly-aminoethanethioate + 2-iminoacetate + 1-deoxy-D-xylulose 5-phosphate = [ThiS sulfur-carrier protein]-C-terminal Gly-Gly + 2-[(2R,5Z)-2-carboxy-4-methylthiazol-5(2H)-ylidene]ethyl phosphate + 2 H2O + H(+). It functions in the pathway cofactor biosynthesis; thiamine diphosphate biosynthesis. Catalyzes the rearrangement of 1-deoxy-D-xylulose 5-phosphate (DXP) to produce the thiazole phosphate moiety of thiamine. Sulfur is provided by the thiocarboxylate moiety of the carrier protein ThiS. In vitro, sulfur can be provided by H(2)S. The chain is Thiazole synthase from Erwinia tasmaniensis (strain DSM 17950 / CFBP 7177 / CIP 109463 / NCPPB 4357 / Et1/99).